The primary structure comprises 201 residues: 3-isopropylmalate dehydratase small subunit (201 aa).

It belongs to the LeuD family. LeuD type 1 subfamily. In terms of assembly, heterodimer of LeuC and LeuD.

The catalysed reaction is (2R,3S)-3-isopropylmalate = (2S)-2-isopropylmalate. Its pathway is amino-acid biosynthesis; L-leucine biosynthesis; L-leucine from 3-methyl-2-oxobutanoate: step 2/4. Functionally, catalyzes the isomerization between 2-isopropylmalate and 3-isopropylmalate, via the formation of 2-isopropylmaleate. The chain is 3-isopropylmalate dehydratase small subunit from Shewanella amazonensis (strain ATCC BAA-1098 / SB2B).